Reading from the N-terminus, the 91-residue chain is Cytoplasmic envelopment protein 3 (91 aa).

The N-myristoyl glycine; by host moiety is linked to residue Gly-2. The disordered stretch occupies residues 48 to 81 (NMGTDEYDEEDEGGDGGEGREPQPEVKTTPYPKR). The span at 52 to 62 (DEYDEEDEGGD) shows a compositional bias: acidic residues.

This sequence belongs to the herpesviridae cytoplasmic envelopment protein 3 family. As to quaternary structure, interacts with cytoplasmic envelopment protein 2; this interaction is essential for the proper localization of each protein to the assembly complex and thus for the production of infectious virus. Myristoylation and palmitoylation (probably on one or more of the nearby cysteines at the N-terminus) enable membrane-binding and Golgi apparatus-specific targeting and are essential for efficient packaging. Post-translationally, phosphorylated. Phosphorylation does not seem to be required for recycling to the host Golgi apparatus. Packaging is selective for underphosphorylated forms.

It localises to the virion tegument. It is found in the virion membrane. The protein resides in the host cell membrane. Its subcellular location is the host Golgi apparatus membrane. Its function is as follows. Plays an important role in the cytoplasmic envelopment of tegument proteins and capsids during the assembly and egress processes. Also participates in viral entry at the fusion step probably by regulating the core fusion machinery. The protein is Cytoplasmic envelopment protein 3 (38) of Equus caballus (Horse).